Reading from the N-terminus, the 464-residue chain is UDP-N-acetylmuramate--L-alanine ligase (464 aa).

117-123 (GTHGKTT) lines the ATP pocket.

It belongs to the MurCDEF family.

Its subcellular location is the cytoplasm. It carries out the reaction UDP-N-acetyl-alpha-D-muramate + L-alanine + ATP = UDP-N-acetyl-alpha-D-muramoyl-L-alanine + ADP + phosphate + H(+). It participates in cell wall biogenesis; peptidoglycan biosynthesis. Its function is as follows. Cell wall formation. This is UDP-N-acetylmuramate--L-alanine ligase from Streptomyces avermitilis (strain ATCC 31267 / DSM 46492 / JCM 5070 / NBRC 14893 / NCIMB 12804 / NRRL 8165 / MA-4680).